A 441-amino-acid polypeptide reads, in one-letter code: Protein MONOCULM 1 (441 aa).

The disordered stretch occupies residues 1–33 (MLRSLHSSSSSDTDNNSGGCKNNGGGGGEAAAA). Residues 7–20 (SSSSSDTDNNSGGC) show a composition bias toward low complexity. The segment covering 21–33 (KNNGGGGGEAAAA) has biased composition (gly residues). In terms of domain architecture, GRAS spans 41 to 437 (RAVAAAAPST…RPLLSVSAWQ (397 aa)). Residues 48–126 (PSTRDLLLAC…GAARPASSGA (79 aa)) are leucine repeat I (LRI). A VHIID region spans residues 127–195 (YLAFNQIAPF…LGPPEVRVTG (69 aa)). The short motif at 158–162 (VHILD) is the VHIID element. Residues 205-256 (RTGNRLRAFARSIHLPFHFTPLLLSCATTAPHHVAGTSTGAAAAASTAAAAT) form a leucine repeat II (LRII) region. The PFYRE stretch occupies residues 266–361 (LAVNCVMFLH…QEVLGREIEA (96 aa)). Positions 364-437 (GPSGGRWWRG…RPLLSVSAWQ (74 aa)) are SAW.

It belongs to the GRAS family. As to expression, expressed in a small number of epidermal or subepidermal cells at the leaf axils, in axillary meristems and the entire tiller buds. Undetected in the shoot apical meristem.

Its subcellular location is the nucleus. In terms of biological role, putative transcription regulator that controls rice tillering by initiating axillary buds and promoting their outgrowth. Rice tiller is a specialized grain-bearing branch that is formed on the unelongated basal internode and grows independently of the mother stem (culm) by means of its own adventitious roots. This chain is Protein MONOCULM 1, found in Oryza sativa subsp. japonica (Rice).